We begin with the raw amino-acid sequence, 347 residues long: Leucine-rich repeat-containing protein 69 (347 aa).

LRR repeat units follow at residues 38-60 (GLKTLVLQNNLIPKVCPELCNLT), 61-82 (QLTTLNLGNNLLEEVPEEMKYL), 84-105 (SLKNLHLSGNRICRFAPGACDG), 108-129 (NLILLNLNNNHLTQLPQEVSRL), 131-153 (SLTYMSINYNQLASIPRELCFLE), 154-175 (NLVELQLNYNQLICIPEEIKFL), 177-199 (KLQKLLLARNNIGVLPEELCDLK), and 200-222 (KLRILDIAGNIIQIFPSGFQDLK).

It belongs to the LRRC69 family.

This is Leucine-rich repeat-containing protein 69 (LRRC69) from Homo sapiens (Human).